The following is a 441-amino-acid chain: MSSEKLFRIQCGYQNYDWGKIGSSSAVAQFVHNSDPSITIDETKPYAELWMGTHPSVPSKAIDLNNQTLRDLVTAKPQEYLGESIITKFGSSKELPFLFKVLSIEKVLSIQAHPDKKLGAQLHAADPKNYPDDNHKPEMAIAVTDFEGFCGFKPLDQLAKTLATVPELNEIIGQELVDEFISGIKLPAEVGSQDDVNNRKLLQKVFGKLMNTDDDVIKQQTAKLLERTDREPQVFKDIDSRLPELIQRLNKQFPNDIGLFCGCLLLNHVGLNKGEAMFLQAKDPHAYISGDIIECMAASDNVVRAGFTPKFKDVKNLVEMLTYSYESVEKQKMPLQEFPRSKGDAVKSVLYDPPIAEFSVLQTIFDKSKGGKQVIEGLNGPSIVIATNGKGTIQITGDDSTKQKIDTGYVFFVAPGSSIELTADSANQDQDFTTYRAFVEA.

Zn(2+) contacts are provided by Gln-111, His-113, Glu-138, and His-285. Arg-304 is an active-site residue.

The protein belongs to the mannose-6-phosphate isomerase type 1 family. Monomer. Zn(2+) serves as cofactor.

It is found in the cytoplasm. The enzyme catalyses D-mannose 6-phosphate = D-fructose 6-phosphate. The protein operates within nucleotide-sugar biosynthesis; GDP-alpha-D-mannose biosynthesis; alpha-D-mannose 1-phosphate from D-fructose 6-phosphate: step 1/2. Its function is as follows. Involved in the synthesis of the GDP-mannose and dolichol-phosphate-mannose required for a number of critical mannosyl transfer reactions. In Candida albicans (strain SC5314 / ATCC MYA-2876) (Yeast), this protein is Mannose-6-phosphate isomerase (PMI1).